We begin with the raw amino-acid sequence, 294 residues long: 2-hydroxy-3-oxopropionate reductase (294 aa).

NAD(+) contacts are provided by residues 4 to 18 (GFIGLGIMGKPMSKN) and Ser95. The active site involves Lys170. Lys238 lines the NAD(+) pocket.

It belongs to the HIBADH-related family. 2-hydroxy-3-oxopropionate reductase subfamily.

The enzyme catalyses (R)-glycerate + NADP(+) = 2-hydroxy-3-oxopropanoate + NADPH + H(+). It carries out the reaction (R)-glycerate + NAD(+) = 2-hydroxy-3-oxopropanoate + NADH + H(+). It functions in the pathway carbohydrate acid metabolism; galactarate degradation; D-glycerate from galactarate: step 3/3. In terms of biological role, catalyzes the reduction of tatronate semialdehyde to D-glycerate. This Escherichia coli O6:H1 (strain CFT073 / ATCC 700928 / UPEC) protein is 2-hydroxy-3-oxopropionate reductase.